The sequence spans 365 residues: Aminomethyltransferase (365 aa).

It belongs to the GcvT family. In terms of assembly, the glycine cleavage system is composed of four proteins: P, T, L and H.

The enzyme catalyses N(6)-[(R)-S(8)-aminomethyldihydrolipoyl]-L-lysyl-[protein] + (6S)-5,6,7,8-tetrahydrofolate = N(6)-[(R)-dihydrolipoyl]-L-lysyl-[protein] + (6R)-5,10-methylene-5,6,7,8-tetrahydrofolate + NH4(+). Its function is as follows. The glycine cleavage system catalyzes the degradation of glycine. This chain is Aminomethyltransferase, found in Erwinia tasmaniensis (strain DSM 17950 / CFBP 7177 / CIP 109463 / NCPPB 4357 / Et1/99).